The sequence spans 205 residues: Holliday junction branch migration complex subunit RuvA (205 aa).

The domain I stretch occupies residues 1–64; it reads MIGRLRGVLV…EDAQLLYGFI (64 aa). Positions 65–143 are domain II; it reads TKQERALFRL…SLLETSAGSE (79 aa). The interval 144–156 is flexible linker; it reads REFMLKSNYTPAP. A domain III region spans residues 157 to 205; the sequence is VVNTAEEDAIAALLSLGYKPAQASKAVSAAFKEGMSSEDLIKSSLKSML.

It belongs to the RuvA family. As to quaternary structure, homotetramer. Forms an RuvA(8)-RuvB(12)-Holliday junction (HJ) complex. HJ DNA is sandwiched between 2 RuvA tetramers; dsDNA enters through RuvA and exits via RuvB. An RuvB hexamer assembles on each DNA strand where it exits the tetramer. Each RuvB hexamer is contacted by two RuvA subunits (via domain III) on 2 adjacent RuvB subunits; this complex drives branch migration. In the full resolvosome a probable DNA-RuvA(4)-RuvB(12)-RuvC(2) complex forms which resolves the HJ.

The protein resides in the cytoplasm. The RuvA-RuvB-RuvC complex processes Holliday junction (HJ) DNA during genetic recombination and DNA repair, while the RuvA-RuvB complex plays an important role in the rescue of blocked DNA replication forks via replication fork reversal (RFR). RuvA specifically binds to HJ cruciform DNA, conferring on it an open structure. The RuvB hexamer acts as an ATP-dependent pump, pulling dsDNA into and through the RuvAB complex. HJ branch migration allows RuvC to scan DNA until it finds its consensus sequence, where it cleaves and resolves the cruciform DNA. This chain is Holliday junction branch migration complex subunit RuvA, found in Shewanella woodyi (strain ATCC 51908 / MS32).